A 1138-amino-acid chain; its full sequence is Serine/threonine/tyrosine-interacting-like protein 2 (1138 aa).

Residues 1-20 (MATGGDAEEEQVVPNEEDEA) are disordered. A Tyrosine-protein phosphatase domain is found at 132–280 (NEVDEVWPNV…LRELNEKLME (149 aa)). Ser291 bears the Phosphoserine mark. Disordered stretches follow at residues 309-336 (EEED…VTLI), 348-473 (EWRK…TWDM), 486-515 (ARKY…DDEE), 552-575 (KKDS…GEKN), 592-618 (QKKV…AKKR), 660-694 (AAPS…LPNL), 761-800 (SGCL…VRGT), and 850-1117 (FKKK…DEAI). A compositionally biased stretch (polar residues) spans 316–331 (SHLSGSSLGKASQVSK). Residue Ser373 is modified to Phosphoserine. Over residues 376–385 (DGDDCEDEDV) the composition is skewed to acidic residues. Basic and acidic residues predominate over residues 386 to 409 (ERIIQEWQSRNERYQAKGREQWNR). The residue at position 427 (Thr427) is a Phosphothreonine. Residues Ser503 and Ser555 each carry the phosphoserine modification. 2 stretches are compositionally biased toward basic and acidic residues: residues 552-567 (KKDS…HGTE) and 595-614 (VGSE…DTVL). Residues 672 to 687 (SVLSTQSHRSHASNMP) show a composition bias toward polar residues. A compositionally biased stretch (low complexity) spans 773–788 (SSDVQSVLSSTSSLTS). Residues 858 to 871 (DEDMSVGDRDEDTD) show a composition bias toward acidic residues. Phosphoserine is present on Ser862. Residues 878-897 (RYSSRSNSQKPETDASSSLA) are compositionally biased toward polar residues. Phosphoserine is present on Ser929. Residues 936-947 (SGSSRGRYTRSS) are compositionally biased toward low complexity. The span at 965–977 (RSQEQDTSFHEAN) shows a compositional bias: basic and acidic residues. Phosphoserine is present on Ser966. Polar residues predominate over residues 980 to 992 (TVRNTSRFSSSTT). A Phosphoserine modification is found at Ser1016. 2 stretches are compositionally biased toward basic and acidic residues: residues 1035-1059 (PEPR…KSDF) and 1074-1091 (RSEE…EEGR). Residues 1095-1106 (GRQSQYRRSTNQ) show a composition bias toward polar residues. A compositionally biased stretch (acidic residues) spans 1107-1116 (QEEEEMDDEA).

This sequence belongs to the protein-tyrosine phosphatase family. Non-receptor class dual specificity subfamily.

The protein localises to the cytoplasm. It is found in the myofibril. Its subcellular location is the sarcomere. May be required for myofiber maturation. The chain is Serine/threonine/tyrosine-interacting-like protein 2 (Styxl2) from Mus musculus (Mouse).